The chain runs to 121 residues: Glycine cleavage system H protein (121 aa).

Residues 22-102 (IAWVGITKYA…DSSVWLFKAE (81 aa)) enclose the Lipoyl-binding domain. Residue Lys-63 is modified to N6-lipoyllysine.

This sequence belongs to the GcvH family. As to quaternary structure, the glycine cleavage system is composed of four proteins: P, T, L and H. The cofactor is (R)-lipoate.

In terms of biological role, the glycine cleavage system catalyzes the degradation of glycine. The H protein shuttles the methylamine group of glycine from the P protein to the T protein. In Tropheryma whipplei (strain TW08/27) (Whipple's bacillus), this protein is Glycine cleavage system H protein.